A 486-amino-acid polypeptide reads, in one-letter code: Katanin p60 ATPase-containing subunit A1 (486 aa).

The disordered stretch occupies residues 103-174 (RSSPLPVRRP…NKAEVSEKEV (72 aa)). The span at 143 to 174 (NGDRAKPLKGKEKKEAKPKDDKNKAEVSEKEV) shows a compositional bias: basic and acidic residues. 244–251 (GPPGTGKT) is an ATP binding site.

This sequence belongs to the AAA ATPase family. Katanin p60 subunit A1 subfamily. In terms of assembly, can homooligomerize into hexameric rings, which may be promoted by interaction with microtubules. Interacts with katnb1, which may serve as a targeting subunit.

It is found in the cytoplasm. The protein localises to the cytoskeleton. It localises to the microtubule organizing center. Its subcellular location is the centrosome. The protein resides in the spindle pole. It is found in the spindle. The catalysed reaction is n ATP + n H2O + a microtubule = n ADP + n phosphate + (n+1) alpha/beta tubulin heterodimers.. ATPase activity is stimulated by microtubules, which promote homooligomerization. ATP-dependent microtubule severing is stimulated by interaction with katnb1. Its function is as follows. Catalytic subunit of a complex which severs microtubules in an ATP-dependent manner. Microtubule severing may promote rapid reorganization of cellular microtubule arrays and the release of microtubules from the centrosome following nucleation. The polypeptide is Katanin p60 ATPase-containing subunit A1 (katna1) (Salmo salar (Atlantic salmon)).